Reading from the N-terminus, the 298-residue chain is Phosphatidylglycerol--prolipoprotein diacylglyceryl transferase (298 aa).

3 helical membrane-spanning segments follow: residues 17–37 (LAVR…IVVG), 59–79 (MMFY…VLFY), and 97–117 (GGMS…LFAW). Arg-142 lines the a 1,2-diacyl-sn-glycero-3-phospho-(1'-sn-glycerol) pocket. The next 2 membrane-spanning stretches (helical) occupy residues 230–250 (MGAI…TVEF) and 257–277 (FLGL…PMIV).

It belongs to the Lgt family.

It localises to the cell inner membrane. It catalyses the reaction L-cysteinyl-[prolipoprotein] + a 1,2-diacyl-sn-glycero-3-phospho-(1'-sn-glycerol) = an S-1,2-diacyl-sn-glyceryl-L-cysteinyl-[prolipoprotein] + sn-glycerol 1-phosphate + H(+). It functions in the pathway protein modification; lipoprotein biosynthesis (diacylglyceryl transfer). In terms of biological role, catalyzes the transfer of the diacylglyceryl group from phosphatidylglycerol to the sulfhydryl group of the N-terminal cysteine of a prolipoprotein, the first step in the formation of mature lipoproteins. This is Phosphatidylglycerol--prolipoprotein diacylglyceryl transferase from Burkholderia cenocepacia (strain ATCC BAA-245 / DSM 16553 / LMG 16656 / NCTC 13227 / J2315 / CF5610) (Burkholderia cepacia (strain J2315)).